The chain runs to 304 residues: Ribosomal protein L11 methyltransferase (304 aa).

The S-adenosyl-L-methionine site is built by Thr-156, Gly-177, Asp-199, and Asn-240.

It belongs to the methyltransferase superfamily. PrmA family.

It localises to the cytoplasm. It carries out the reaction L-lysyl-[protein] + 3 S-adenosyl-L-methionine = N(6),N(6),N(6)-trimethyl-L-lysyl-[protein] + 3 S-adenosyl-L-homocysteine + 3 H(+). Its function is as follows. Methylates ribosomal protein L11. In Symbiobacterium thermophilum (strain DSM 24528 / JCM 14929 / IAM 14863 / T), this protein is Ribosomal protein L11 methyltransferase.